We begin with the raw amino-acid sequence, 58 residues long: Protein translocase subunit SecE (58 aa).

Residues 38-58 traverse the membrane as a helical segment; sequence IVMAFVGLLAYLIQLVLAFII.

It belongs to the SecE/SEC61-gamma family. In terms of assembly, component of the Sec protein translocase complex. Heterotrimer consisting of SecY (alpha), SecG (beta) and SecE (gamma) subunits. The heterotrimers can form oligomers, although 1 heterotrimer is thought to be able to translocate proteins. Interacts with the ribosome. May interact with SecDF, and other proteins may be involved.

The protein resides in the cell membrane. Its function is as follows. Essential subunit of the Sec protein translocation channel SecYEG. Clamps together the 2 halves of SecY. May contact the channel plug during translocation. The polypeptide is Protein translocase subunit SecE (Acidianus ambivalens (Desulfurolobus ambivalens)).